Here is a 240-residue protein sequence, read N- to C-terminus: 2,3,4,5-tetrahydropyridine-2,6-dicarboxylate N-acetyltransferase (240 aa).

This sequence belongs to the transferase hexapeptide repeat family. DapH subfamily.

It carries out the reaction (S)-2,3,4,5-tetrahydrodipicolinate + acetyl-CoA + H2O = L-2-acetamido-6-oxoheptanedioate + CoA. It functions in the pathway amino-acid biosynthesis; L-lysine biosynthesis via DAP pathway; LL-2,6-diaminopimelate from (S)-tetrahydrodipicolinate (acetylase route): step 1/3. In terms of biological role, catalyzes the transfer of an acetyl group from acetyl-CoA to tetrahydrodipicolinate. The protein is 2,3,4,5-tetrahydropyridine-2,6-dicarboxylate N-acetyltransferase of Halalkalibacterium halodurans (strain ATCC BAA-125 / DSM 18197 / FERM 7344 / JCM 9153 / C-125) (Bacillus halodurans).